A 50-amino-acid chain; its full sequence is Insulin (50 aa).

3 disulfides stabilise this stretch: Cys7-Cys36, Cys19-Cys49, and Cys35-Cys40.

This sequence belongs to the insulin family. As to quaternary structure, heterodimer of a B chain and an A chain linked by two disulfide bonds.

The protein localises to the secreted. Insulin decreases blood glucose concentration. It increases cell permeability to monosaccharides, amino acids and fatty acids. It accelerates glycolysis, the pentose phosphate cycle, and glycogen synthesis in liver. The protein is Insulin (INS) of Proechimys guairae (Guaira spiny rat).